The primary structure comprises 826 residues: Eukaryotic translation initiation factor 3 subunit C (826 aa).

Disordered stretches follow at residues 1 to 71 and 205 to 227; these read MSRF…GKGA and SGGD…PRAK. Positions 10–20 are enriched in acidic residues; that stretch reads DSDDSSSDEDL. Over residues 21–30 the composition is skewed to low complexity; sequence YGSGSESGSD. Residues 32 to 65 are compositionally biased toward acidic residues; that stretch reads SQDEQDGGDDNDDDMSDDSMFADDSDDDSDDDED. A compositionally biased stretch (basic and acidic residues) spans 218-227; sequence KEDKPKPRAK. The PCI domain occupies 605–779; it reads FHTHINLELL…NSVVFTQAVQ (175 aa).

The protein belongs to the eIF-3 subunit C family. As to quaternary structure, component of the eukaryotic translation initiation factor 3 (eIF-3) complex.

The protein localises to the cytoplasm. Its function is as follows. Component of the eukaryotic translation initiation factor 3 (eIF-3) complex, which is involved in protein synthesis of a specialized repertoire of mRNAs and, together with other initiation factors, stimulates binding of mRNA and methionyl-tRNAi to the 40S ribosome. The eIF-3 complex specifically targets and initiates translation of a subset of mRNAs involved in cell proliferation. The sequence is that of Eukaryotic translation initiation factor 3 subunit C from Yarrowia lipolytica (strain CLIB 122 / E 150) (Yeast).